We begin with the raw amino-acid sequence, 46 residues long: Apamin (46 aa).

The signal sequence occupies residues 1-27; the sequence is MISMLRCIYLFLSVILITSYFVTPVMP. Cystine bridges form between C28–C38 and C30–C42. The tract at residues 40-41 is essential for toxin activity; sequence RR. A Histidine amide modification is found at H45.

As to expression, expressed by the venom gland.

It is found in the secreted. Toxin with unique selectivity to KCa2 channels. Potently blocks human, rat and mouse KCa2.2/KCNN2/SK2 channels (IC(50)=27-140 pM), and moderately blocks human and rat KCa2.3/KCNN3/SK3 channels (IC(50)=0.6-4 nM), and human (IC(50)=0.7-12 nM) and mouse (IC(50)=28 nM) KCa2.1/KCNN1/SK1 channels. Does not show any antimicrobial activity. In vivo, intracerebroventricular injection into rats of a dose of 1 ng results in neurodegeneration specifically in the Purkinje cells of the cerebellum, and induces seizures characterized by hypersensitivity to noise, loss of postural control, paroxystic jerking, and alternating periods of great agitation with tonic-clonic convulsions and periods of total prostration. When administered at high doses, exerts anti-inflammatory, anti-oxidative, anti-fibrotic and anti-apoptotic properties in several models of inflammatory disease, including gouty arthritis, atherosclerosis, atopic dermatitis and acute kidney injury. Down-regulates pro-inflammatory signaling pathways, such as the NF-kappaB and STAT3 pathways, probably by blocking SK channels such as KCa2.2/KCNN2/SK2 and/or KCa2.3/KCNN3/SK3 which are thought to be involved in promoting some inflammatory responses. For example in mouse and rat microglia cells, inhibits LPS-activated KCa2.2/KCNN2/SK2 channels and TLR4 expression leading to the down-regulation of the NF-kappaB, STAT, and MAPK/ERK signaling pathways and, as a consequence, decreases secretion of pro-inflammatory cytokines. This Apis mellifera (Honeybee) protein is Apamin.